The chain runs to 379 residues: Cytochrome b (379 aa).

The next 4 membrane-spanning stretches (helical) occupy residues 33-53, 77-98, 113-133, and 178-198; these read FGSLLGMCLVIQILTGLFLAM, WLIRYLHANGASMFFICLFIHV, WNIGIILLLTTMATAFVGYVL, and FFAFHFILPFIIAAFALVHLL. Residues H83 and H97 each coordinate heme b. 2 residues coordinate heme b: H182 and H196. H201 contributes to the a ubiquinone binding site. 4 helical membrane-spanning segments follow: residues 226-246, 288-308, 320-340, and 347-367; these read TKDLLGIFLLLLVLMILALFF, LGGVLALVLSILILATFPLLN, VTQVIYWIFIANLLVLTWIGG, and FTTIGQIASITYFTIIIILIP.

Belongs to the cytochrome b family. As to quaternary structure, the cytochrome bc1 complex contains 11 subunits: 3 respiratory subunits (MT-CYB, CYC1 and UQCRFS1), 2 core proteins (UQCRC1 and UQCRC2) and 6 low-molecular weight proteins (UQCRH/QCR6, UQCRB/QCR7, UQCRQ/QCR8, UQCR10/QCR9, UQCR11/QCR10 and a cleavage product of UQCRFS1). This cytochrome bc1 complex then forms a dimer. Heme b is required as a cofactor.

It is found in the mitochondrion inner membrane. In terms of biological role, component of the ubiquinol-cytochrome c reductase complex (complex III or cytochrome b-c1 complex) that is part of the mitochondrial respiratory chain. The b-c1 complex mediates electron transfer from ubiquinol to cytochrome c. Contributes to the generation of a proton gradient across the mitochondrial membrane that is then used for ATP synthesis. The sequence is that of Cytochrome b (MT-CYB) from Akodon mystax (Caparao grass mouse).